The primary structure comprises 650 residues: Flap endonuclease 1 (650 aa).

An N-domain region spans residues 1-106 (MGIKGLTKFI…SELEKRGEKR (106 aa)). A Mg(2+)-binding site is contributed by Asp34. The DNA site is built by Arg47 and Arg72. Asp88, Glu160, Glu162, Asp181, and Asp183 together coordinate Mg(2+). The I-domain stretch occupies residues 124–266 (EIKKQSGRTV…KTAYNLIKEY (143 aa)). Glu160 lines the DNA pocket. DNA contacts are provided by Gly244 and Asp246. Residue Asp246 participates in Mg(2+) binding. An interaction with PCNA region spans residues 349 to 357 (TQRRLDNFF). A disordered region spans residues 371 to 592 (ETKKEQTLPA…NSYNNIKNNN (222 aa)). Basic and acidic residues-rich tracts occupy residues 413–469 (MKEE…KKSL), 478–502 (DSDK…EKIN), and 511–524 (DHSR…KDNI). Low complexity predominate over residues 525 to 562 (SDINNNNNNNNNNSSSNNNNISNNHFNSVSSNSTFNSS). Over residues 565 to 581 (LKSEDTLKSNSPLKEDS) the composition is skewed to basic and acidic residues. Over residues 582-592 (PNSYNNIKNNN) the composition is skewed to low complexity.

Belongs to the XPG/RAD2 endonuclease family. FEN1 subfamily. In terms of assembly, interacts with PCNA1 and PCNA2. Three molecules of FEN1 bind to one PCNA trimer with each molecule binding to one PCNA monomer. PCNA stimulates the nuclease activity without altering cleavage specificity. The cofactor is Mg(2+). In terms of processing, phosphorylated. Phosphorylation upon DNA damage induces relocalization to the nuclear plasma.

It is found in the nucleus. Its subcellular location is the nucleolus. The protein localises to the nucleoplasm. It localises to the mitochondrion. Inhibited by monovalent metal ions. Functionally, structure-specific nuclease with 5'-flap endonuclease and 5'-3' exonuclease activities involved in DNA replication and repair. During DNA replication, cleaves the 5'-overhanging flap structure that is generated by displacement synthesis when DNA polymerase encounters the 5'-end of a downstream Okazaki fragment. It enters the flap from the 5'-end and then tracks to cleave the flap base, leaving a nick for ligation. Also involved in the long patch base excision repair (LP-BER) pathway, by cleaving within the apurinic/apyrimidinic (AP) site-terminated flap. Acts as a genome stabilization factor that prevents flaps from equilibrating into structures that lead to duplications and deletions. Also possesses 5'-3' exonuclease activity on nicked or gapped double-stranded DNA, and exhibits RNase H activity. Also involved in replication and repair of rDNA and in repairing mitochondrial DNA. The chain is Flap endonuclease 1 from Plasmodium falciparum.